We begin with the raw amino-acid sequence, 103 residues long: Large ribosomal subunit protein bL21 (103 aa).

It belongs to the bacterial ribosomal protein bL21 family. Part of the 50S ribosomal subunit. Contacts protein L20.

In terms of biological role, this protein binds to 23S rRNA in the presence of protein L20. The protein is Large ribosomal subunit protein bL21 of Haemophilus influenzae (strain ATCC 51907 / DSM 11121 / KW20 / Rd).